Reading from the N-terminus, the 111-residue chain is Disintegrin acostatin-alpha (111 aa).

A signal peptide spans 1-20; that stretch reads MIQVLLVTLCLAVFPYQGSS. The propeptide occupies 21-46; the sequence is IILESGNVNDYEVVYPRKVTALPKGA. Residues 47–111 enclose the Disintegrin domain; it reads IQPKNPCCDA…GDCPRKHFYA (65 aa). Pyrrolidone carboxylic acid; in Disintegrin acostatin-alpha, processed form is present on Gln-48. 4 disulfide bridges follow: Cys-53/Cys-76, Cys-67/Cys-73, Cys-72/Cys-97, and Cys-85/Cys-104. Residues 89-91 carry the Cell attachment site motif; it reads RGD. Positions 110–111 are excised as a propeptide; it reads YA.

The protein belongs to the disintegrin family. Dimeric disintegrin subfamily. As to quaternary structure, heterodimer with subunit beta; disulfide-linked. In terms of tissue distribution, expressed by the venom gland.

The protein resides in the secreted. Its function is as follows. Inhibits fibrinogen interaction with platelets. Acts by binding to alpha-IIb/beta-3 (ITGA2B/ITGB3) on the platelet surface and inhibits ADP-induced platelet aggregation in human platelet-rich plasma. The chain is Disintegrin acostatin-alpha from Agkistrodon contortrix contortrix (Southern copperhead).